The following is a 372-amino-acid chain: Cytochrome b (372 aa).

Transmembrane regions (helical) follow at residues 25 to 45, 69 to 90, 105 to 125, and 170 to 190; these read FGSM…FLAI, WMMQ…YIHI, WLSG…GYVL, and FFAL…IHIM. 2 residues coordinate heme b: His-75 and His-89. Residues His-174 and His-188 each coordinate heme b. Residue His-193 coordinates a ubiquinone. 4 helical membrane passes run 218-238, 280-300, 312-332, and 339-358; these read HKDM…MSFM, LGGT…PFTH, LMQF…WAAT, and FTTI…IMNP.

It belongs to the cytochrome b family. As to quaternary structure, the cytochrome bc1 complex contains 3 respiratory subunits (MT-CYB, CYC1 and UQCRFS1), 2 core proteins (UQCRC1 and UQCRC2) and probably 6 low-molecular weight proteins. Heme b serves as cofactor.

Its subcellular location is the mitochondrion inner membrane. Its function is as follows. Component of the ubiquinol-cytochrome c reductase complex (complex III or cytochrome b-c1 complex) that is part of the mitochondrial respiratory chain. The b-c1 complex mediates electron transfer from ubiquinol to cytochrome c. Contributes to the generation of a proton gradient across the mitochondrial membrane that is then used for ATP synthesis. This Pantherophis obsoletus (Black ratsnake) protein is Cytochrome b (MT-CYB).